A 489-amino-acid polypeptide reads, in one-letter code: Mitochondrial distribution and morphology protein 10 (489 aa).

The protein belongs to the MDM10 family. In terms of assembly, component of the ER-mitochondria encounter structure (ERMES) or MDM complex, composed of MMM1, MDM10, MDM12 and MDM34. Associates with the mitochondrial outer membrane sorting assembly machinery SAM(core) complex.

Its subcellular location is the mitochondrion outer membrane. Its function is as follows. Component of the ERMES/MDM complex, which serves as a molecular tether to connect the endoplasmic reticulum and mitochondria. Components of this complex are involved in the control of mitochondrial shape and protein biogenesis and may function in phospholipid exchange. MDM10 is involved in the late assembly steps of the general translocase of the mitochondrial outer membrane (TOM complex). Functions in the TOM40-specific route of the assembly of outer membrane beta-barrel proteins, including the association of TOM40 with the receptor TOM22 and small TOM proteins. Can associate with the SAM(core) complex as well as the MDM12-MMM1 complex, both involved in late steps of the major beta-barrel assembly pathway, that is responsible for biogenesis of all outer membrane beta-barrel proteins. May act as a switch that shuttles between both complexes and channels precursor proteins into the TOM40-specific pathway. Plays a role in mitochondrial morphology and in the inheritance of mitochondria. This chain is Mitochondrial distribution and morphology protein 10, found in Arthroderma otae (strain ATCC MYA-4605 / CBS 113480) (Microsporum canis).